The primary structure comprises 507 residues: Maturase K (507 aa).

Belongs to the intron maturase 2 family. MatK subfamily.

The protein resides in the plastid. Its subcellular location is the chloroplast. Usually encoded in the trnK tRNA gene intron. Probably assists in splicing its own and other chloroplast group II introns. This is Maturase K from Cananga odorata (Ylang-ylang tree).